We begin with the raw amino-acid sequence, 397 residues long: Inositol 3-kinase (397 aa).

ATP is bound by residues Ser228, 278–281 (GAGD), and Asn305. The active-site Proton acceptor is Asp281.

It belongs to the carbohydrate kinase pfkB family. In terms of tissue distribution, expressed in roots, leaf blade shoots, leaf sheath shoots and panicles.

The catalysed reaction is myo-inositol + ATP = 1D-myo-inositol 3-phosphate + ADP + H(+). Kinase that phosphorylates myo-inositol to produce multiple myo-inositol monophosphates. Participates in phytic acid biosynthesis in developing seeds. Phytic acid is the primary storage form of phosphorus in cereal grains and other plant seeds. This Oryza sativa subsp. japonica (Rice) protein is Inositol 3-kinase.